The chain runs to 154 residues: Spermatogenesis-associated protein 19, mitochondrial (154 aa).

Residues 1–24 (MIITTWIVYILARKGAGLPFPPKV) constitute a mitochondrion transit peptide. Phosphoserine is present on residues Ser26 and Ser116.

The protein resides in the mitochondrion outer membrane. The protein localises to the mitochondrion. It is found in the cell projection. It localises to the cilium. Its subcellular location is the flagellum. Its function is as follows. Essential for sperm motility and male fertility. Plays an important role in sperm motility by regulating the organization and function of the mitochondria and is also required for correct sperm midpiece assembly. In Bos taurus (Bovine), this protein is Spermatogenesis-associated protein 19, mitochondrial (SPATA19).